Here is a 232-residue protein sequence, read N- to C-terminus: U2 small nuclear ribonucleoprotein B'' (232 aa).

The 80-residue stretch at 10–89 (QTVYLRNLNE…KRMRVQYAKT (80 aa)) folds into the RRM 1 domain. The interval 92 to 159 (DCLATEDGST…QEPPAPPNNI (68 aa)) is disordered. A compositionally biased stretch (basic and acidic residues) spans 108–123 (KKQEEKAAEKKRRAEE). Over residues 127–151 (SGPNAAAQSNGTGYQASRLGKTSQE) the composition is skewed to polar residues. In terms of domain architecture, RRM 2 spans 158–232 (NILFIQNLPA…NPMAISYAKK (75 aa)).

It belongs to the RRM U1 A/B'' family. As to quaternary structure, component of the spliceosome where it is associated with snRNP U2.

It localises to the nucleus. It is found in the cajal body. The protein localises to the nucleoplasm. Its subcellular location is the cytoplasm. Its function is as follows. Involved in nuclear pre-mRNA splicing. The polypeptide is U2 small nuclear ribonucleoprotein B'' (Oryza sativa subsp. indica (Rice)).